Here is a 171-residue protein sequence, read N- to C-terminus: Large ribosomal subunit protein uL10 (171 aa).

The protein belongs to the universal ribosomal protein uL10 family. As to quaternary structure, part of the ribosomal stalk of the 50S ribosomal subunit. The N-terminus interacts with L11 and the large rRNA to form the base of the stalk. The C-terminus forms an elongated spine to which L12 dimers bind in a sequential fashion forming a multimeric L10(L12)X complex.

Forms part of the ribosomal stalk, playing a central role in the interaction of the ribosome with GTP-bound translation factors. The protein is Large ribosomal subunit protein uL10 of Corynebacterium jeikeium (strain K411).